Consider the following 346-residue polypeptide: L-threonine dehydratase catabolic TdcB (346 aa).

Residue 59–60 (FT) coordinates AMP. Lysine 64 carries the post-translational modification N6-(pyridoxal phosphate)lysine. Residues glutamine 94, 125–126 (GY), and asparagine 321 each bind AMP.

This sequence belongs to the serine/threonine dehydratase family. In terms of assembly, in the native structure, TdcB is in a dimeric form, whereas in the TdcB-AMP complex, it exists in a tetrameric form (dimer of dimers). Requires pyridoxal 5'-phosphate as cofactor.

The enzyme catalyses L-threonine = 2-oxobutanoate + NH4(+). It functions in the pathway amino-acid degradation; L-threonine degradation via propanoate pathway; propanoate from L-threonine: step 1/4. Its activity is regulated as follows. Each protein molecule can bind up to four molecules of AMP, which act as an allosteric activator to the enzyme. Functionally, catalyzes the anaerobic formation of alpha-ketobutyrate and ammonia from threonine in a two-step reaction. The first step involved a dehydration of threonine and a production of enamine intermediates (aminocrotonate), which tautomerizes to its imine form (iminobutyrate). Both intermediates are unstable and short-lived. The second step is the nonenzymatic hydrolysis of the enamine/imine intermediates to form 2-ketobutyrate and free ammonia. In the low water environment of the cell, the second step is accelerated by RidA. The chain is L-threonine dehydratase catabolic TdcB (tdcB) from Staphylococcus aureus (strain USA300).